A 150-amino-acid chain; its full sequence is Glycophorin-A (150 aa).

The signal sequence occupies residues 1–19 (MYGKIIFVLLLSEIVSISA). The Extracellular segment spans residues 20–91 (LSTTEVAMHT…QLAHHFSEPE (72 aa)). Ser21 is a glycosylation site (O-linked (GalNAc...) serine). Thr22, Thr23, and Thr29 each carry an O-linked (GalNAc...) threonine glycan. Residue Ser30 is glycosylated (O-linked (GalNAc...) serine). O-linked (GalNAc...) threonine glycosylation occurs at Thr31. Ser32 carries O-linked (GalNAc...) serine glycosylation. Residue Thr36 is glycosylated (O-linked (GalNAc...) threonine). O-linked (GalNAc...) serine glycans are attached at residues Ser38 and Ser41. A glycan (O-linked (GalNAc...) threonine) is linked at Thr44. Asn45 is a glycosylation site (N-linked (GlcNAc...) asparagine). Thr52 and Thr56 each carry an O-linked (GalNAc...) threonine glycan. 2 O-linked (GalNAc...) serine glycosylation sites follow: Ser63 and Ser66. O-linked (GalNAc...) threonine glycosylation occurs at Thr69. Residues 92 to 114 (ITLIIFGVMAGVIGTILLISYGI) form a helical membrane-spanning segment. Topologically, residues 115–150 (RRLIKKSPSDVKPLPSPDTDVPLSSVEIENPETSDQ) are cytoplasmic. Positions 121-150 (SPSDVKPLPSPDTDVPLSSVEIENPETSDQ) are disordered. The residue at position 133 (Thr133) is a Phosphothreonine. 2 positions are modified to phosphoserine: Ser138 and Ser148.

This sequence belongs to the glycophorin A family. In terms of assembly, homodimer. Component of the ankyrin-1 complex in the erythrocyte, composed of ANK1, RHCE, RHAG, SLC4A1, EPB42, GYPA, GYPB and AQP1. Interacts with SLC4A1; a GYPA monomer is bound at each end of the SLC4A1 dimer forming a heterotetramer. As to quaternary structure, (Microbial infection) Interacts with Streptococcus gordonii hsa protein. (Microbial infection) Interacts (in a sialic acid-independent manner) with P.falciparum MSP1 subunit p83. In terms of processing, the major O-linked glycan are NeuAc-alpha-(2-3)-Gal-beta-(1-3)-[NeuAc-alpha-(2-6)]-GalNAcOH (about 78 %) and NeuAc-alpha-(2-3)-Gal-beta-(1-3)-GalNAcOH (17 %). Minor O-glycans (5 %) include NeuAc-alpha-(2-3)-Gal-beta-(1-3)-[NeuAc-alpha-(2-6)]-GalNAcOH NeuAc-alpha-(2-8)-NeuAc-alpha-(2-3)-Gal-beta-(1-3)-GalNAcOH. About 1% of all O-linked glycans carry blood group A, B and H determinants. They derive from a type-2 precursor core structure, Gal-beta-(1,3)-GlcNAc-beta-1-R, and the antigens are synthesized by addition of fucose (H antigen-specific) and then N-acetylgalactosamine (A antigen-specific) or galactose (B antigen-specific). Specifically O-linked-glycans are NeuAc-alpha-(2-3)-Gal-beta-(1-3)-GalNAcOH-(6-1)-GlcNAc-beta-(4-1)-[Fuc-alpha-(1-2)]-Gal-beta-(3-1)-GalNAc-alpha (about 1%, B antigen-specific) and NeuAc-alpha-(2-3)-Gal-beta-(1-3)-GalNAcOH-(6-1)-GlcNAc-beta-(4-1)-[Fuc-alpha-(1-2)]-Gal-beta (1 %, O antigen-, A antigen- and B antigen-specific).

It is found in the cell membrane. In terms of biological role, component of the ankyrin-1 complex, a multiprotein complex involved in the stability and shape of the erythrocyte membrane. Glycophorin A is the major intrinsic membrane protein of the erythrocyte. The N-terminal glycosylated segment, which lies outside the erythrocyte membrane, has MN blood group receptors. Appears to be important for the function of SLC4A1 and is required for high activity of SLC4A1. May be involved in translocation of SLC4A1 to the plasma membrane. (Microbial infection) Appears to be a receptor for Hepatitis A virus (HAV). Functionally, (Microbial infection) Receptor for P.falciparum erythrocyte-binding antigen 175 (EBA-175); binding of EBA-175 is dependent on sialic acid residues of the O-linked glycans. The sequence is that of Glycophorin-A from Homo sapiens (Human).